A 210-amino-acid polypeptide reads, in one-letter code: Pyridoxine/pyridoxamine 5'-phosphate oxidase (210 aa).

Substrate is bound by residues 7 to 10 and K65; that span reads REDY. Residues 60 to 65, 75 to 76, R81, K82, and Q104 each bind FMN; these read RMVLLK and FT. The substrate site is built by Y122, R126, and S130. Residues 139 to 140 and W183 contribute to the FMN site; that span reads QS. 189–191 serves as a coordination point for substrate; it reads RLH. Residue R193 coordinates FMN.

This sequence belongs to the pyridoxamine 5'-phosphate oxidase family. As to quaternary structure, homodimer. Requires FMN as cofactor.

The enzyme catalyses pyridoxamine 5'-phosphate + O2 + H2O = pyridoxal 5'-phosphate + H2O2 + NH4(+). The catalysed reaction is pyridoxine 5'-phosphate + O2 = pyridoxal 5'-phosphate + H2O2. The protein operates within cofactor metabolism; pyridoxal 5'-phosphate salvage; pyridoxal 5'-phosphate from pyridoxamine 5'-phosphate: step 1/1. It functions in the pathway cofactor metabolism; pyridoxal 5'-phosphate salvage; pyridoxal 5'-phosphate from pyridoxine 5'-phosphate: step 1/1. In terms of biological role, catalyzes the oxidation of either pyridoxine 5'-phosphate (PNP) or pyridoxamine 5'-phosphate (PMP) into pyridoxal 5'-phosphate (PLP). The polypeptide is Pyridoxine/pyridoxamine 5'-phosphate oxidase (Neisseria gonorrhoeae (strain ATCC 700825 / FA 1090)).